The chain runs to 1071 residues: Serine/threonine-protein phosphatase 6 regulatory ankyrin repeat subunit C (1071 aa).

ANK repeat units follow at residues 7–36 (SDQP…EVNA), 40–69 (ERRT…NVNA), 73–102 (VWLT…DVTA), 106–135 (YWQT…SLNM), 139–168 (TGRA…NLSA), 172–201 (KDRQ…DKSC), 205–234 (RGYT…EIDE), 238–267 (FGNT…NVNQ), 271–301 (RGYT…DVNM), 305–334 (EGKS…EIDC), 338–367 (YGNT…DTAR), 371–400 (HGMF…LYSI), 422–451 (FGRT…DMNK), 455–484 (FGRT…EVNE), 488–539 (SGCT…DPCL), 543–573 (KGYS…TLGD), 578–607 (GSIS…CVDV), 611–640 (VGRS…SCLL), 645–674 (SKWG…GADL), 681–710 (EGQT…CPDM), 714–743 (RGRT…SVLS), 747–776 (QGRS…HSQP), 784–814 (HGYT…SIQE), 816–845 (NPFT…CNSL), 852–881 (KGRT…DIDA), 885–915 (SGRS…DLSL), 919–951 (NKNT…LINA), and 955–984 (MLQM…TVLA).

In terms of assembly, protein phosphatase 6 (PP6) holoenzyme is proposed to be a heterotrimeric complex formed by the catalytic subunit, a SAPS domain-containing subunit (PP6R) and an ankyrin repeat-domain containing regulatory subunit (ARS).

Putative regulatory subunit of protein phosphatase 6 (PP6) that may be involved in the recognition of phosphoprotein substrates. The protein is Serine/threonine-protein phosphatase 6 regulatory ankyrin repeat subunit C (ankrd52) of Danio rerio (Zebrafish).